The chain runs to 169 residues: Glycine-rich RNA-binding protein GRP2A (169 aa).

The region spanning 8–86 (YRCFVGGLAW…RSITVNEAQS (79 aa)) is the RRM domain. Disordered regions lie at residues 69–100 (MNGQ…GGGG) and 125–169 (YSGG…GGGW). Residues 89–100 (SGAGGGGRGGGG) are compositionally biased toward gly residues.

In terms of tissue distribution, predominantly expressed in meristematic and growing tissue.

It localises to the nucleus. May play a general role in circadian phenomena associated with meristematic tissue. The chain is Glycine-rich RNA-binding protein GRP2A from Sinapis alba (White mustard).